A 532-amino-acid chain; its full sequence is P granule abnormality protein 2 (532 aa).

In terms of assembly, interacts with pgl-1 and pgl-3; association with either pgl-1 or pgl-3 is not required for P-granule localization. In terms of tissue distribution, highly expressed in the germline.

The protein localises to the cytoplasmic granule. Its function is as follows. Transient component of P-granule which is involved in germline development. The protein is P granule abnormality protein 2 of Caenorhabditis elegans.